A 376-amino-acid chain; its full sequence is Succinyl-diaminopimelate desuccinylase (376 aa).

Zn(2+) is bound at residue H68. Residue D70 is part of the active site. D101 contacts Zn(2+). E135 serves as the catalytic Proton acceptor. E136, E164, and H349 together coordinate Zn(2+).

Belongs to the peptidase M20A family. DapE subfamily. As to quaternary structure, homodimer. Zn(2+) is required as a cofactor. Requires Co(2+) as cofactor.

It catalyses the reaction N-succinyl-(2S,6S)-2,6-diaminopimelate + H2O = (2S,6S)-2,6-diaminopimelate + succinate. The protein operates within amino-acid biosynthesis; L-lysine biosynthesis via DAP pathway; LL-2,6-diaminopimelate from (S)-tetrahydrodipicolinate (succinylase route): step 3/3. In terms of biological role, catalyzes the hydrolysis of N-succinyl-L,L-diaminopimelic acid (SDAP), forming succinate and LL-2,6-diaminopimelate (DAP), an intermediate involved in the bacterial biosynthesis of lysine and meso-diaminopimelic acid, an essential component of bacterial cell walls. The sequence is that of Succinyl-diaminopimelate desuccinylase from Marinobacter nauticus (strain ATCC 700491 / DSM 11845 / VT8) (Marinobacter aquaeolei).